A 198-amino-acid polypeptide reads, in one-letter code: Holliday junction branch migration complex subunit RuvA (198 aa).

Residues 1–63 (MYDYIKGQLT…EDAHLLFGFH (63 aa)) are domain I. The domain II stretch occupies residues 64-142 (TEDEKDVFLK…EAPQETGNTK (79 aa)). Residues 143–147 (ARSNK) are flexible linker. The interval 148–198 (AGNTQLDEAIEALLALGYKATELKKIRAFFEGTSETAEQYIKSALKLLMKG) is domain III.

This sequence belongs to the RuvA family. In terms of assembly, homotetramer. Forms an RuvA(8)-RuvB(12)-Holliday junction (HJ) complex. HJ DNA is sandwiched between 2 RuvA tetramers; dsDNA enters through RuvA and exits via RuvB. An RuvB hexamer assembles on each DNA strand where it exits the tetramer. Each RuvB hexamer is contacted by two RuvA subunits (via domain III) on 2 adjacent RuvB subunits; this complex drives branch migration. In the full resolvosome a probable DNA-RuvA(4)-RuvB(12)-RuvC(2) complex forms which resolves the HJ.

It localises to the cytoplasm. Its function is as follows. The RuvA-RuvB-RuvC complex processes Holliday junction (HJ) DNA during genetic recombination and DNA repair, while the RuvA-RuvB complex plays an important role in the rescue of blocked DNA replication forks via replication fork reversal (RFR). RuvA specifically binds to HJ cruciform DNA, conferring on it an open structure. The RuvB hexamer acts as an ATP-dependent pump, pulling dsDNA into and through the RuvAB complex. HJ branch migration allows RuvC to scan DNA until it finds its consensus sequence, where it cleaves and resolves the cruciform DNA. This Streptococcus pyogenes serotype M12 (strain MGAS2096) protein is Holliday junction branch migration complex subunit RuvA.